The following is a 498-amino-acid chain: MSSDIDELRREIDIVDVISEYLNLEKVGSNYRTNCPFHPDDTPSFYVSPSKQIFKCFGCGVGGDAIKFVSLYEDISYFEAALELAKRYGKKLDLEKISKDEKVYVALDRVCDFYRESLLKNREASEYVKSRGIDPKVARKFDLGYAPSSEALVKVLKENDLLEAYLETKNLLSPTKGVYRDLFLRRVVIPIKDPRGRVIGFGGRRIVEDKSPKYINSPDSRVFKKGENLFGLYEAKEYIKEEGFAILVEGYFDLLRLFSEGIRNVVAPLGTALTQNQANLLSKFTKKVYILYDGDDAGRKAMKSAIPLLLSAGVEVYPVYLPEGYDPDEFIKEFGKEELRRLINSSGELFETLIKTARENLEEKTREFRYYLGFISDGVRRFALASEFHTKYKVPMEILLMKIEKNSQEKEIKLSFKEKIFLKGLIELKPKIDLEVLNLSPELKELAVNALNGEEHLLPKEVLEYQVDNLEKLFNNILRDLQKSGKKRKKRGLKNVNT.

The segment at 35-59 (CPFHPDDTPSFYVSPSKQIFKCFGC) adopts a CHC2-type zinc-finger fold. The Toprim domain occupies 243–324 (GFAILVEGYF…EVYPVYLPEG (82 aa)). Mg(2+)-binding residues include glutamate 249, aspartate 293, and aspartate 295.

Belongs to the DnaG primase family. In terms of assembly, monomer. Interacts with DnaB. The cofactor is Zn(2+). Mg(2+) serves as cofactor.

It carries out the reaction ssDNA + n NTP = ssDNA/pppN(pN)n-1 hybrid + (n-1) diphosphate.. In terms of biological role, RNA polymerase that catalyzes the synthesis of short RNA molecules used as primers for DNA polymerase during DNA replication. In Aquifex aeolicus (strain VF5), this protein is DNA primase.